We begin with the raw amino-acid sequence, 447 residues long: Beclin-2 (447 aa).

Residues 169-228 adopt a coiled-coil conformation; that stretch reads EALHAELCAELSSLEQEEARLTQELEDLDGHHARVAAELRAAQAESKELYKQHEQHRVEY. The required for homodimer formation stretch occupies residues 186–256; that stretch reads EARLTQELED…NQLTYALSQQ (71 aa).

Belongs to the beclin family. Homodimer (via coiled-coil domain). Interacts (via coiled-coil domain) with ATG14 (via coiled-coil domain); this interaction is tighter than BECN2 self-association. Interacts with AMBRA1, UVRAG and PIK3C3/VPS34; these interactions are not disrupted by starvation. Does not interact with RUBCN. Interacts (via N-terminus) with GPRASP1/GASP1; the interaction is direct. Expressed in brain, skeletal muscle, placenta, thymus and uterus. Expressed at a lower level in liver, testis, stomach, and 17-day-old embryos.

The protein localises to the cytoplasm. Its function is as follows. Involved in 2 distinct lysosomal degradation pathways: acts as a regulator of autophagy and as a regulator of G-protein coupled receptors turnover. Regulates degradation in lysosomes of a variety of G-protein coupled receptors via its interaction with GPRASP1/GASP1. The chain is Beclin-2 from Mus musculus (Mouse).